A 184-amino-acid polypeptide reads, in one-letter code: MFLPSVLAASNLVKVQPGLIFWTLVTFVIAAVVLKWKAWGPILSLVEEREKQIASSIESAKRERAEAEKLLADQKTAIAEARREAAEMMRRNTQEMEKFREELMAKSRKEAEELKLSARREIDEQKAKAIAEVRSMAVDLAMEVAGKLISERMDDSKQRALAEQFVQGLPLNSTSATGAVRRTA.

Residues Val-15–Leu-34 form a helical membrane-spanning segment.

This sequence belongs to the ATPase B chain family. In terms of assembly, F-type ATPases have 2 components, F(1) - the catalytic core - and F(0) - the membrane proton channel. F(1) has five subunits: alpha(3), beta(3), gamma(1), delta(1), epsilon(1). F(0) has three main subunits: a(1), b(2) and c(10-14). The alpha and beta chains form an alternating ring which encloses part of the gamma chain. F(1) is attached to F(0) by a central stalk formed by the gamma and epsilon chains, while a peripheral stalk is formed by the delta and b chains.

It is found in the cell inner membrane. Its function is as follows. F(1)F(0) ATP synthase produces ATP from ADP in the presence of a proton or sodium gradient. F-type ATPases consist of two structural domains, F(1) containing the extramembraneous catalytic core and F(0) containing the membrane proton channel, linked together by a central stalk and a peripheral stalk. During catalysis, ATP synthesis in the catalytic domain of F(1) is coupled via a rotary mechanism of the central stalk subunits to proton translocation. Component of the F(0) channel, it forms part of the peripheral stalk, linking F(1) to F(0). This is ATP synthase subunit b from Myxococcus xanthus (strain DK1622).